The chain runs to 445 residues: Rab GDP dissociation inhibitor beta (445 aa).

Position 1 is an N-acetylmethionine (Met1). Position 57 is an N6-succinyllysine (Lys57). Position 112 is an N6-acetyllysine (Lys112). Ser130 carries the phosphoserine modification. N6-acetyllysine is present on Lys269. Ser382 carries the post-translational modification Phosphoserine.

This sequence belongs to the Rab GDI family. Interacts with RHOH. Interacts with the GDP-bound inactive forms of RAB3A, RAB3B, RAB3C, RAB5A, RAB5B, RAB5C, RAB8A, RAB8B, RAB10, RAB12, RAB35, and RAB43; binds RAB3D to a lesser extent. Interacts with DZIP1; this interaction negatively regulates the interaction of GDI2 with GDP-bound RAB8A. In terms of tissue distribution, ubiquitously expressed.

Its subcellular location is the cytoplasm. It is found in the membrane. The protein localises to the golgi apparatus. It localises to the trans-Golgi network. GDP-dissociation inhibitor preventing the GDP to GTP exchange of most Rab proteins. By keeping these small GTPases in their inactive GDP-bound form regulates intracellular membrane trafficking. Negatively regulates protein transport to the cilium and ciliogenesis through the inhibition of RAB8A. In Rattus norvegicus (Rat), this protein is Rab GDP dissociation inhibitor beta (Gdi2).